The sequence spans 518 residues: Cytochrome P450 monooxygenase psoD (518 aa).

A heme-binding site is contributed by cysteine 442.

The protein belongs to the cytochrome P450 family. The cofactor is heme.

Its pathway is secondary metabolite biosynthesis. Its function is as follows. Cytochrome P450 monooxygenase; part of the gene cluster that mediates the biosynthesis of pseurotin A, a competitive inhibitor of chitin synthase and an inducer of nerve-cell proliferation. The PKS-NRPS hybrid synthetase psoA is responsible for the biosynthesis of azaspirene, one of the first intermediates having the 1-oxa-7-azaspiro[4,4]-non-2-ene-4,6-dione core of pseurotin, via condensation of one acetyl-CoA, 4 malonyl-CoA, and a L-phenylalanine molecule. The dual-functional monooxygenase/methyltransferase psoF seems to be involved in the addition of the C3 methyl group onto the pseurotin scaffold. Azaspirene is then converted to synerazol through 4 steps including oxidation of C17 by the cytochrome P450 monooxygenase psoD, O-methylation of the hydroxy group of C8 by the methyltransferase psoC, and the trans-to-cis isomerization of the C13 olefin by the glutathione S-transferase psoE. The fourth step of synerazol production is performed by the dual-functional monooxygenase/methyltransferase psoF which seems to catalyze the epoxidation of the intermediate deepoxy-synerazol. Synerazol can be attacked by a water molecule nonenzymatically at two different positions to yield two diol products, pseurotin A and pseurotin D. This Aspergillus fumigatus (strain ATCC MYA-4609 / CBS 101355 / FGSC A1100 / Af293) (Neosartorya fumigata) protein is Cytochrome P450 monooxygenase psoD.